The primary structure comprises 117 residues: UPF0102 protein Swoo_0351 (117 aa).

It belongs to the UPF0102 family.

This chain is UPF0102 protein Swoo_0351, found in Shewanella woodyi (strain ATCC 51908 / MS32).